Consider the following 341-residue polypeptide: UDP-N-acetylglucosamine--N-acetylmuramyl-(pentapeptide) pyrophosphoryl-undecaprenol N-acetylglucosamine transferase (341 aa).

Residues 10–12 (TGG), Asn-124, Ser-177, and Gln-275 each bind UDP-N-acetyl-alpha-D-glucosamine.

The protein belongs to the glycosyltransferase 28 family. MurG subfamily.

The protein localises to the cell inner membrane. It carries out the reaction di-trans,octa-cis-undecaprenyl diphospho-N-acetyl-alpha-D-muramoyl-L-alanyl-D-glutamyl-meso-2,6-diaminopimeloyl-D-alanyl-D-alanine + UDP-N-acetyl-alpha-D-glucosamine = di-trans,octa-cis-undecaprenyl diphospho-[N-acetyl-alpha-D-glucosaminyl-(1-&gt;4)]-N-acetyl-alpha-D-muramoyl-L-alanyl-D-glutamyl-meso-2,6-diaminopimeloyl-D-alanyl-D-alanine + UDP + H(+). The protein operates within cell wall biogenesis; peptidoglycan biosynthesis. Cell wall formation. Catalyzes the transfer of a GlcNAc subunit on undecaprenyl-pyrophosphoryl-MurNAc-pentapeptide (lipid intermediate I) to form undecaprenyl-pyrophosphoryl-MurNAc-(pentapeptide)GlcNAc (lipid intermediate II). This chain is UDP-N-acetylglucosamine--N-acetylmuramyl-(pentapeptide) pyrophosphoryl-undecaprenol N-acetylglucosamine transferase, found in Campylobacter hominis (strain ATCC BAA-381 / DSM 21671 / CCUG 45161 / LMG 19568 / NCTC 13146 / CH001A).